We begin with the raw amino-acid sequence, 170 residues long: Arginine repressor (170 aa).

The protein belongs to the ArgR family.

The protein localises to the cytoplasm. It functions in the pathway amino-acid biosynthesis; L-arginine biosynthesis [regulation]. Functionally, regulates arginine biosynthesis genes. The chain is Arginine repressor from Bifidobacterium longum (strain NCC 2705).